The sequence spans 394 residues: Phosphoglycerate kinase (394 aa).

Substrate contacts are provided by residues 21–23 (DLN), Arg-36, 59–62 (HLGR), Arg-113, and Arg-146. ATP contacts are provided by residues Lys-197, Glu-319, and 345 to 348 (GGDT).

This sequence belongs to the phosphoglycerate kinase family. In terms of assembly, monomer.

Its subcellular location is the cytoplasm. It carries out the reaction (2R)-3-phosphoglycerate + ATP = (2R)-3-phospho-glyceroyl phosphate + ADP. It functions in the pathway carbohydrate degradation; glycolysis; pyruvate from D-glyceraldehyde 3-phosphate: step 2/5. This is Phosphoglycerate kinase from Halorhodospira halophila (strain DSM 244 / SL1) (Ectothiorhodospira halophila (strain DSM 244 / SL1)).